The chain runs to 249 residues: MTVLSCSINTLIKEGLYEISGVEVGQHFYWQIGGFQVHAQVLITSWVVIAILLGSAVLAVRNPQTIPTDGQNFFEFVLEFIRDVSQTQIGEEYGPWVPFIGTLFLFIFVSNWSGALLPWKIIQLPQGELAAPTNDINTTVALALLTSVAYFYAGLSKKGLGYFSKYIQPTPILLPINILEDFTKPLSLSFRLFGNILADELVVVVLVSLVPLVVPIPVMFLGLFTSGIQALIFATLAAAYIGESMEGHH.

Helical transmembrane passes span 40–60 (QVLITSWVVIAILLGSAVLAV), 97–117 (VPFIGTLFLFIFVSNWSGALL), 136–156 (INTTVALALLTSVAYFYAGLS), 201–221 (LVVVVLVSLVPLVVPIPVMFL), and 222–242 (GLFTSGIQALIFATLAAAYIG).

Belongs to the ATPase A chain family. F-type ATPases have 2 components, CF(1) - the catalytic core - and CF(0) - the membrane proton channel. CF(1) has five subunits: alpha(3), beta(3), gamma(1), delta(1), epsilon(1). CF(0) has four main subunits: a, b, b' and c.

Its subcellular location is the plastid. The protein localises to the chloroplast thylakoid membrane. Key component of the proton channel; it plays a direct role in the translocation of protons across the membrane. This Draba nemorosa (Woodland whitlowgrass) protein is ATP synthase subunit a, chloroplastic.